The sequence spans 363 residues: Alanine racemase (363 aa).

Lys-39 serves as the catalytic Proton acceptor; specific for D-alanine. An N6-(pyridoxal phosphate)lysine modification is found at Lys-39. Arg-134 contributes to the substrate binding site. Tyr-251 (proton acceptor; specific for L-alanine) is an active-site residue. Met-299 lines the substrate pocket.

Belongs to the alanine racemase family. Requires pyridoxal 5'-phosphate as cofactor.

The catalysed reaction is L-alanine = D-alanine. Its pathway is amino-acid biosynthesis; D-alanine biosynthesis; D-alanine from L-alanine: step 1/1. Functionally, catalyzes the interconversion of L-alanine and D-alanine. May also act on other amino acids. This Thermodesulfovibrio yellowstonii (strain ATCC 51303 / DSM 11347 / YP87) protein is Alanine racemase (alr).